The sequence spans 287 residues: Phosphatidylserine decarboxylase proenzyme (287 aa).

Catalysis depends on charge relay system; for autoendoproteolytic cleavage activity residues aspartate 90, histidine 147, and serine 253. The active-site Schiff-base intermediate with substrate; via pyruvic acid; for decarboxylase activity is serine 253. Pyruvic acid (Ser); by autocatalysis is present on serine 253.

Belongs to the phosphatidylserine decarboxylase family. PSD-B subfamily. Prokaryotic type I sub-subfamily. As to quaternary structure, heterodimer of a large membrane-associated beta subunit and a small pyruvoyl-containing alpha subunit. Pyruvate serves as cofactor. Is synthesized initially as an inactive proenzyme. Formation of the active enzyme involves a self-maturation process in which the active site pyruvoyl group is generated from an internal serine residue via an autocatalytic post-translational modification. Two non-identical subunits are generated from the proenzyme in this reaction, and the pyruvate is formed at the N-terminus of the alpha chain, which is derived from the carboxyl end of the proenzyme. The autoendoproteolytic cleavage occurs by a canonical serine protease mechanism, in which the side chain hydroxyl group of the serine supplies its oxygen atom to form the C-terminus of the beta chain, while the remainder of the serine residue undergoes an oxidative deamination to produce ammonia and the pyruvoyl prosthetic group on the alpha chain. During this reaction, the Ser that is part of the protease active site of the proenzyme becomes the pyruvoyl prosthetic group, which constitutes an essential element of the active site of the mature decarboxylase.

Its subcellular location is the cell membrane. The enzyme catalyses a 1,2-diacyl-sn-glycero-3-phospho-L-serine + H(+) = a 1,2-diacyl-sn-glycero-3-phosphoethanolamine + CO2. Its pathway is phospholipid metabolism; phosphatidylethanolamine biosynthesis; phosphatidylethanolamine from CDP-diacylglycerol: step 2/2. Catalyzes the formation of phosphatidylethanolamine (PtdEtn) from phosphatidylserine (PtdSer). The sequence is that of Phosphatidylserine decarboxylase proenzyme from Aliivibrio fischeri (strain MJ11) (Vibrio fischeri).